The chain runs to 118 residues: Sporulation protein YjcA (118 aa).

Helical transmembrane passes span Ile8–Met28, Phe62–Ile82, and Ala92–Val112.

Belongs to the UPF0713 family.

It localises to the cell membrane. In terms of biological role, involved in sporulation. In Bacillus subtilis (strain 168), this protein is Sporulation protein YjcA (yjcA).